A 227-amino-acid polypeptide reads, in one-letter code: LysM and putative peptidoglycan-binding domain-containing protein 1 (227 aa).

Ser23 and Ser33 each carry phosphoserine. Positions 40 to 84 (LEHQLEPGDTLAGLALKYGVTMEQIKRTNRLYTNDSIFLKKTLYI) constitute a LysM domain. The tract at residues 95–157 (NGLDSEEEEN…PSHDLSASDF (63 aa)) is disordered. Residues 98-108 (DSEEEENDGEE) show a composition bias toward acidic residues. Ser99 bears the Phosphoserine mark. Residues 143-152 (QGTSTPSHDL) show a composition bias toward polar residues. Residues Ser166, Ser181, Ser194, and Ser212 each carry the phosphoserine modification. Residues 169-227 (KKAAAQKLRKGESGVPEEDTGLYPSSPRMQQRAVLGPVPLTRTSRTQTLRDQEDEIFKL) form a disordered region. Basic and acidic residues predominate over residues 216 to 227 (TLRDQEDEIFKL).

This Rattus norvegicus (Rat) protein is LysM and putative peptidoglycan-binding domain-containing protein 1 (Lysmd1).